Here is a 265-residue protein sequence, read N- to C-terminus: Cytochrome b-c1 complex subunit Rieske, mitochondrial (265 aa).

A mitochondrion-targeting transit peptide spans 1–53; sequence MLRVAGRRLSSSAARSSSTFFTRSSFTVTDDSSPARSPSPSLTSSFLDQIRGF. Residues 54–102 lie on the Mitochondrial matrix side of the membrane; it reads SSNSVSPAHQLGLVSDLPATVAAIKNPSSKIVYDDSNHERYPPGDPSKR. A helical membrane pass occupies residues 103 to 125; the sequence is AFAYFVLTGGRFVYASSVRLLIL. Residues 126–265 are Mitochondrial intermembrane-facing; it reads KFVLSMSASK…FLEENKLLIG (140 aa). The region spanning 175 to 263 is the Rieske domain; it reads IKLANSVDLG…YSFLEENKLL (89 aa). Residues Cys208, His210, Cys227, and His230 each coordinate [2Fe-2S] cluster. Cys213 and Cys229 form a disulfide bridge.

Belongs to the Rieske iron-sulfur protein family. In terms of assembly, component of the ubiquinol-cytochrome c oxidoreductase (cytochrome b-c1 complex, complex III, CIII), a multisubunit enzyme composed of 3 respiratory subunits cytochrome b, cytochrome c1 and Rieske protein, 2 core protein subunits, and several low-molecular weight protein subunits. The complex exists as an obligatory dimer and forms supercomplexes (SCs) in the inner mitochondrial membrane with cytochrome c oxidase (complex IV, CIV). [2Fe-2S] cluster serves as cofactor.

Its subcellular location is the mitochondrion inner membrane. The catalysed reaction is a quinol + 2 Fe(III)-[cytochrome c](out) = a quinone + 2 Fe(II)-[cytochrome c](out) + 2 H(+)(out). Its function is as follows. Component of the ubiquinol-cytochrome c oxidoreductase, a multisubunit transmembrane complex that is part of the mitochondrial electron transport chain which drives oxidative phosphorylation. The respiratory chain contains 3 multisubunit complexes succinate dehydrogenase (complex II, CII), ubiquinol-cytochrome c oxidoreductase (cytochrome b-c1 complex, complex III, CIII) and cytochrome c oxidase (complex IV, CIV), that cooperate to transfer electrons derived from NADH and succinate to molecular oxygen, creating an electrochemical gradient over the inner membrane that drives transmembrane transport and the ATP synthase. The cytochrome b-c1 complex catalyzes electron transfer from ubiquinol to cytochrome c, linking this redox reaction to translocation of protons across the mitochondrial inner membrane, with protons being carried across the membrane as hydrogens on the quinol. In the process called Q cycle, 2 protons are consumed from the matrix, 4 protons are released into the intermembrane space and 2 electrons are passed to cytochrome c. The Rieske protein is a catalytic core subunit containing a [2Fe-2S] iron-sulfur cluster. It cycles between 2 conformational states during catalysis to transfer electrons from the quinol bound in the Q(0) site in cytochrome b to cytochrome c1. The polypeptide is Cytochrome b-c1 complex subunit Rieske, mitochondrial (FES1) (Solanum tuberosum (Potato)).